The chain runs to 175 residues: MSKLVTFSQQRSAWLILMFSALGLEASALYFQYVMLLDPCVMCIYIRVAVLGLILAGLVGSIAPRFWIVRFLGMSLWGVSSAWGAKLSFELYQMQANPSPFSTCSFYPEFPTWMPLDAWMPSIFMPTGMCSDIPWTMMSLSMTQWTLIAFVGYSIAFLLFIYPGLLYKKPTNPYS.

At 1-13 (MSKLVTFSQQRSA) the chain is on the cytoplasmic side. A helical transmembrane segment spans residues 14–30 (WLILMFSALGLEASALY). Residues 31 to 48 (FQYVMLLDPCVMCIYIRV) lie on the Periplasmic side of the membrane. The cysteines at positions 40 and 43 are disulfide-linked. Residues 49 to 64 (AVLGLILAGLVGSIAP) form a helical membrane-spanning segment. Residues 65 to 71 (RFWIVRF) are Cytoplasmic-facing. A helical transmembrane segment spans residues 72–89 (LGMSLWGVSSAWGAKLSF). The Periplasmic segment spans residues 90–144 (ELYQMQANPSPFSTCSFYPEFPTWMPLDAWMPSIFMPTGMCSDIPWTMMSLSMTQ). Cysteine 104 and cysteine 130 form a disulfide bridge. The chain crosses the membrane as a helical span at residues 145–163 (WTLIAFVGYSIAFLLFIYP). Over 164-175 (GLLYKKPTNPYS) the chain is Cytoplasmic.

The protein belongs to the DsbB family.

It is found in the cell inner membrane. Functionally, required for disulfide bond formation in some periplasmic proteins. Acts by oxidizing the DsbA protein. This Shewanella denitrificans (strain OS217 / ATCC BAA-1090 / DSM 15013) protein is Disulfide bond formation protein B.